The primary structure comprises 144 residues: Ninjurin-2 (144 aa).

Topologically, residues 1–62 (MESDREIIHL…KSVLEQGPFS (62 aa)) are extracellular. The interval 27 to 39 (NHYATKKSVAESM) is helix alpha1. The tract at residues 40-59 (LDVALFMSNAMRLKSVLEQG) is helix alpha2. A helical transmembrane segment spans residues 63–94 (QYYTTLLTLISASLLLQVVIGILLVVIARLNL). At 95–98 (NEVE) the chain is on the cytoplasmic side. Residues 99–128 (NQWRLNQLNNAATTLVFITVVINIFITAFG) form a helical membrane-spanning segment. Glutamine 105 contacts cholesterol. Over 129 to 144 (AHKTGSVAARTSSNPI) the chain is Extracellular.

It belongs to the ninjurin family. As to quaternary structure, homooligomer; in response to stimuli, homooligomerizes into filaments. In contrast to NINJ1, the filament is curved toward the intracellular space, preventing its circularization on a relatively flat membrane to mediate plasma membrane rupture: curvature is caused by cholesterol-binding at the cytoplasmic leaflet.

Its subcellular location is the cell membrane. Its function is as follows. Its role in unclear. In contrast to NINJ1 paralog, does not mediate plasma membrane rupture (cytolysis) downstream of necroptotic and pyroptotic programmed cell death. While it is able to oligomerize and form filaments, filaments are curved toward the intracellular space, preventing circularization to mediate plasma membrane rupture. May act as a homophilic transmembrane adhesion molecule involved in nerve regeneration. Promotes axonal growth. In Rattus norvegicus (Rat), this protein is Ninjurin-2 (Ninj2).